The primary structure comprises 485 residues: Silicon efflux transporter LSI3 (485 aa).

5 consecutive transmembrane segments (helical) span residues 14–34 (VAFG…LPIG), 37–57 (AGAL…ADDA), 59–79 (ASID…GGYL), 106–126 (VCVV…CVVL), and 180–200 (FLLG…LMLL). A compositionally biased stretch (basic and acidic residues) spans 233 to 242 (ALNNNKKDDG). The tract at residues 233–261 (ALNNNKKDDGDAATPASPEDDDGGDAESM) is disordered. 5 helical membrane passes run 283-303 (LFLK…YMLG), 336-356 (LLVF…TGLP), 377-397 (VLSV…TVLL), 418-438 (WLLL…GSAA), and 461-481 (HVIF…PLIG).

It belongs to the arsenite-antimonite (ArsB) efflux (TC 2.A.45) family.

The protein resides in the cell membrane. Its function is as follows. Silicon efflux transporter involved in silicon transport in shoots. In the nodes, involved with LSI2 and NIP2-2/LSI6 in silicon intervascular transfer, which is required for the preferential distribution of silicon, such as hyperaccumulation of silicon in the husk. Silicon is beneficial to plant growth and helps plants to overcome abiotic and biotic stresses by preventing lodging (falling over) and increasing resistance to pests and diseases, as well as other stresses. The polypeptide is Silicon efflux transporter LSI3 (Oryza sativa subsp. japonica (Rice)).